The sequence spans 450 residues: Glucose-6-phosphate isomerase (450 aa).

Residue Thr-39 is modified to Phosphothreonine. The active-site Proton donor is the Glu-291. Residues His-312 and Lys-426 contribute to the active site.

The protein belongs to the GPI family.

It localises to the cytoplasm. The enzyme catalyses alpha-D-glucose 6-phosphate = beta-D-fructose 6-phosphate. It functions in the pathway carbohydrate biosynthesis; gluconeogenesis. The protein operates within carbohydrate degradation; glycolysis; D-glyceraldehyde 3-phosphate and glycerone phosphate from D-glucose: step 2/4. Its function is as follows. Catalyzes the reversible isomerization of glucose-6-phosphate to fructose-6-phosphate. This is Glucose-6-phosphate isomerase from Bacillus cytotoxicus (strain DSM 22905 / CIP 110041 / 391-98 / NVH 391-98).